A 490-amino-acid chain; its full sequence is Glutamyl-tRNA(Gln) amidotransferase subunit A (490 aa).

Residues lysine 80 and serine 155 each act as charge relay system in the active site. Serine 179 acts as the Acyl-ester intermediate in catalysis.

The protein belongs to the amidase family. GatA subfamily. Heterotrimer of A, B and C subunits.

The enzyme catalyses L-glutamyl-tRNA(Gln) + L-glutamine + ATP + H2O = L-glutaminyl-tRNA(Gln) + L-glutamate + ADP + phosphate + H(+). Its function is as follows. Allows the formation of correctly charged Gln-tRNA(Gln) through the transamidation of misacylated Glu-tRNA(Gln) in organisms which lack glutaminyl-tRNA synthetase. The reaction takes place in the presence of glutamine and ATP through an activated gamma-phospho-Glu-tRNA(Gln). This chain is Glutamyl-tRNA(Gln) amidotransferase subunit A, found in Brevibacillus brevis (strain 47 / JCM 6285 / NBRC 100599).